The chain runs to 754 residues: 1,4-alpha-glucan branching enzyme GlgB (754 aa).

Asp431 acts as the Nucleophile in catalysis. Glu484 functions as the Proton donor in the catalytic mechanism.

This sequence belongs to the glycosyl hydrolase 13 family. GlgB subfamily. Monomer.

The catalysed reaction is Transfers a segment of a (1-&gt;4)-alpha-D-glucan chain to a primary hydroxy group in a similar glucan chain.. The protein operates within glycan biosynthesis; glycogen biosynthesis. In terms of biological role, catalyzes the formation of the alpha-1,6-glucosidic linkages in glycogen by scission of a 1,4-alpha-linked oligosaccharide from growing alpha-1,4-glucan chains and the subsequent attachment of the oligosaccharide to the alpha-1,6 position. The chain is 1,4-alpha-glucan branching enzyme GlgB from Prochlorococcus marinus (strain MIT 9215).